The sequence spans 398 residues: Succinate--CoA ligase [ADP-forming] subunit beta (398 aa).

The 246-residue stretch at 9–254 (KALLGEFGVP…ETEEDAKEIE (246 aa)) folds into the ATP-grasp domain. Residues Lys-46, 53 to 55 (GRG), Glu-109, Ser-112, and Glu-117 contribute to the ATP site. Mg(2+) is bound by residues Asn-209 and Asp-223. Substrate is bound by residues Asn-274 and 331–333 (GIM).

This sequence belongs to the succinate/malate CoA ligase beta subunit family. In terms of assembly, heterotetramer of two alpha and two beta subunits. Mg(2+) serves as cofactor.

It catalyses the reaction succinate + ATP + CoA = succinyl-CoA + ADP + phosphate. It carries out the reaction GTP + succinate + CoA = succinyl-CoA + GDP + phosphate. It participates in carbohydrate metabolism; tricarboxylic acid cycle; succinate from succinyl-CoA (ligase route): step 1/1. Its function is as follows. Succinyl-CoA synthetase functions in the citric acid cycle (TCA), coupling the hydrolysis of succinyl-CoA to the synthesis of either ATP or GTP and thus represents the only step of substrate-level phosphorylation in the TCA. The beta subunit provides nucleotide specificity of the enzyme and binds the substrate succinate, while the binding sites for coenzyme A and phosphate are found in the alpha subunit. This chain is Succinate--CoA ligase [ADP-forming] subunit beta, found in Bradyrhizobium diazoefficiens (strain JCM 10833 / BCRC 13528 / IAM 13628 / NBRC 14792 / USDA 110).